A 72-amino-acid chain; its full sequence is Prokaryotic ubiquitin-like protein Pup (72 aa).

A compositionally biased stretch (gly residues) spans 1–10; sequence MATKDTGGGQ. Positions 1 to 45 are disordered; that stretch reads MATKDTGGGQQKATRNTEEVEEQAQDAQASEDLKERQEKLSDDVD. Positions 9-60 form a coiled coil; it reads GQQKATRNTEEVEEQAQDAQASEDLKERQEKLSDDVDSVLDEIDDVLEENAE. The interval 28 to 66 is ARC ATPase binding; that stretch reads QASEDLKERQEKLSDDVDSVLDEIDDVLEENAEDFVRSF. Residues 31–42 are compositionally biased toward basic and acidic residues; sequence EDLKERQEKLSD. Glutamate 72 is covalently cross-linked (Isoglutamyl lysine isopeptide (Glu-Lys) (interchain with K-? in acceptor proteins)).

The protein belongs to the prokaryotic ubiquitin-like protein family. In terms of assembly, strongly interacts with the proteasome-associated ATPase ARC through a hydrophobic interface; the interacting region of Pup lies in its C-terminal half. There is one Pup binding site per ARC hexamer ring.

It participates in protein degradation; proteasomal Pup-dependent pathway. Protein modifier that is covalently attached to lysine residues of substrate proteins, thereby targeting them for proteasomal degradation. The tagging system is termed pupylation. In Streptomyces avermitilis (strain ATCC 31267 / DSM 46492 / JCM 5070 / NBRC 14893 / NCIMB 12804 / NRRL 8165 / MA-4680), this protein is Prokaryotic ubiquitin-like protein Pup.